A 2342-amino-acid chain; its full sequence is Outer kinetochore KNL1 complex subunit KNL1 (2342 aa).

Residues 1-56 form a disordered region; the sequence is MDGVSSEANEENDNIERPVRRRHSSILKPPRSPLQDLRGGNERVQESNALRNKKNS. Residues 1–250 form a may mediate oligomerization region; it reads MDGVSSEANE…FNDFIKRLKT (250 aa). The interaction with BUB1 and BUB1B stretch occupies residues 1 to 728; sequence MDGVSSEANE…QSLFSTTKPL (728 aa). 2 interaction with microtubules regions span residues 17-34 and 53-80; these read RPVR…RSPL and KKNS…VRKS. Residues 23–80 are interaction with PP1CA; contains the protein phosphatase 1 (PP1) interaction motifs SILK, RVXF and phi-phi; the sequence is HSSILKPPRSPLQDLRGGNERVQESNALRNKKNSRRVSFADTIKVFQTESHMKIVRKS. S24 is modified (phosphoserine; by AURKB). Position 32 is a phosphoserine (S32). S60 carries the phosphoserine; by AURKB modification. The tract at residues 174 to 190 is interaction with BUB1; the sequence is ENQMDLTSSHTVMITKG. The segment at 210–226 is interaction with BUB1B; the sequence is ANLKLHTEDSRMKKEVN. T539 bears the Phosphothreonine mark. 2 positions are modified to phosphoserine: S578 and S584. T586 carries the post-translational modification Phosphothreonine. The disordered stretch occupies residues 620–646; that stretch reads APESTSESHSQSKSSSDECEEITKSRN. Low complexity predominate over residues 622-633; it reads ESTSESHSQSKS. S767 bears the Phosphoserine mark. A 2 X 104 AA approximate repeats region spans residues 855–1201; that stretch reads EDESVQKPKF…VTDSHTVFID (347 aa). Repeat unit 1 spans residues 885–989; that stretch reads DKTIVFSEDD…MTESHTVFID (105 aa). Position 901 is a phosphothreonine (T901). S956, S1039, S1076, and S1088 each carry phosphoserine. The stretch at 1099–1201 is repeat 2; that stretch reads DKTIVFSENH…VTDSHTVFID (103 aa). S1448 bears the Phosphoserine mark. Residues 1639 to 1662 form a disordered region; it reads SNAKDSRDEENKKSHNGAETTSLP. The span at 1642–1651 shows a compositional bias: basic and acidic residues; sequence KDSRDEENKK. Phosphoserine occurs at positions 1675 and 1773. The short motif at 1789–1803 is the Nuclear localization signal element; that stretch reads TWVQEEEDIHKEKKI. Residue S1831 is modified to Phosphoserine. 2 positions are modified to phosphoserine; by TTK: S1831 and S1834. S1845 and S1860 each carry phosphoserine. Residues 1981–2108 are required for interaction with ZWINT; the sequence is KMRHCSDKEL…LLELEVQKEQ (128 aa). The stretch at 2024-2133 forms a coiled coil; the sequence is VQSAQNEREK…EELLDQLSLS (110 aa). The segment at 2091–2311 is interaction with NSL1, DSN1 and required for assembly into the outer kinetochore; sequence EEEELQRNLL…GNTSQDDIAT (221 aa).

In terms of assembly, component of the KNL1 complex composed of KNL1 and ZWINT. Part of the ten-subunit outer kinetochore KMN network that includes the KNL1, MIS12 and NDC80 complexes; a bioriented kinetochore contains approximately 150 copies of the network. Interacts (via C-terminus) with the MIS12 complex subunits NSL1 (via C-terminus), PMF1 and DSN1; the interaction is direct. Interacts (via N-terminal region) with BUB1B (via BUB1 N-terminal domain); the interaction is direct and is required for cell cycle arrest upon activation of the mitotic spindle assembly checkpoint. Interacts (via N-terminal region) with BUB1 (via BUB1 N-terminal domain); the interaction is direct. Interacts with the protein phosphatase PP1 subunit PPP1CA; the interaction is direct and mutually exclusive with binding to microtubules. Interacts with the protein phosphatase PP1 subunit PPP1CC; the interaction is direct and mutually exclusive with binding to microtubules. In terms of processing, phosphorylation by AURKB negatively regulates its interaction with protein phosphatase 1 (PP1) subunit PPP1CA and with microtubules. As to expression, highly expressed in testis, where it is localized in germ cells, in particular in spermatocytes and in the pre-acrosome of round spermatids. Detected in the acrosome of ejaculated spermatozoa. Detected in adult thymus, bone marrow, colon, small intestine, appendix and placenta, and in fetal liver and thymus.

The protein resides in the nucleus. It localises to the chromosome. Its subcellular location is the centromere. It is found in the kinetochore. The protein localises to the cytoplasm. Acts as a component of the outer kinetochore KNL1 complex that serves as a docking point for spindle assembly checkpoint components and mediates microtubule-kinetochore interactions. Kinetochores, consisting of a centromere-associated inner segment and a microtubule-contacting outer segment, play a crucial role in chromosome segregation by mediating the physical connection between centromeric DNA and spindle microtubules. The outer kinetochore is made up of the ten-subunit KMN network, comprising the MIS12, NDC80 and KNL1 complexes, and auxiliary microtubule-associated components; together they connect the outer kinetochore with the inner kinetochore, bind microtubules, and mediate interactions with mitotic checkpoint proteins that delay anaphase until chromosomes are bioriented on the spindle. Required for kinetochore binding by a distinct subset of kMAPs (kinetochore-bound microtubule-associated proteins) and motors. Acts in coordination with CENPK to recruit the NDC80 complex to the outer kinetochore. Can bind either to microtubules or to the protein phosphatase 1 (PP1) catalytic subunits PPP1CA and PPP1CC (via overlapping binding sites), it has higher affinity for PP1. Recruits MAD2L1 to the kinetochore and also directly links BUB1 and BUB1B to the kinetochore. In addition to orienting mitotic chromosomes, it is also essential for alignment of homologous chromosomes during meiotic metaphase I. In meiosis I, required to activate the spindle assembly checkpoint at unattached kinetochores to correct erroneous kinetochore-microtubule attachments. This chain is Outer kinetochore KNL1 complex subunit KNL1, found in Homo sapiens (Human).